A 337-amino-acid polypeptide reads, in one-letter code: tRNA pseudouridine synthase D (337 aa).

D77 functions as the Nucleophile in the catalytic mechanism. The TRUD domain occupies 152–308; it reads GFPNYFTEQR…ARDFHWEFVE (157 aa).

Belongs to the pseudouridine synthase TruD family.

The catalysed reaction is uridine(13) in tRNA = pseudouridine(13) in tRNA. Functionally, responsible for synthesis of pseudouridine from uracil-13 in transfer RNAs. This chain is tRNA pseudouridine synthase D, found in Mannheimia succiniciproducens (strain KCTC 0769BP / MBEL55E).